Consider the following 311-residue polypeptide: MTLHGPLGLLDTARELRGFRTEPAQMRAGAPGKVGRLRLGFSLRDGVSVLHDLYRVAPLLVQQALYWDEAMPDLPVCPIISVGGGILQGDRYTIDITVGEGACAHVSTQGANRIHCMDANYAAQHQNVTVEAGGYLEYLPDVTIPYRGSRFLSRTEIVVAEDATLLYGEMVLAGRKHHHAEERFGFDLLSMDVTLRRPGGRKLFAEKILIERGDPTIAFAAVMRGFDVFANILCVTPPGTAARIKERFETNFSSDAPRAVSGVSRLPNAAGLMLRAVGVETYDVRNEVRRFWRIVREEVRGRPLPAEPYWR.

The protein belongs to the UreD family. In terms of assembly, ureD, UreF and UreG form a complex that acts as a GTP-hydrolysis-dependent molecular chaperone, activating the urease apoprotein by helping to assemble the nickel containing metallocenter of UreC. The UreE protein probably delivers the nickel.

The protein localises to the cytoplasm. Its function is as follows. Required for maturation of urease via the functional incorporation of the urease nickel metallocenter. The polypeptide is Urease accessory protein UreD 3 (Methylorubrum populi (strain ATCC BAA-705 / NCIMB 13946 / BJ001) (Methylobacterium populi)).